Consider the following 335-residue polypeptide: Lipase chaperone (335 aa).

The chain crosses the membrane as a helical span at residues 1–21 (MSGSILLLPLAIALGLGFFIA).

It belongs to the lipase chaperone family.

The protein resides in the cell inner membrane. Its function is as follows. May be involved in the folding of the extracellular lipase during its passage through the periplasm. The protein is Lipase chaperone of Stutzerimonas stutzeri (strain A1501) (Pseudomonas stutzeri).